The following is a 113-amino-acid chain: Phosphoribosyl-ATP pyrophosphatase (113 aa).

Belongs to the PRA-PH family.

It localises to the cytoplasm. It catalyses the reaction 1-(5-phospho-beta-D-ribosyl)-ATP + H2O = 1-(5-phospho-beta-D-ribosyl)-5'-AMP + diphosphate + H(+). Its pathway is amino-acid biosynthesis; L-histidine biosynthesis; L-histidine from 5-phospho-alpha-D-ribose 1-diphosphate: step 2/9. This Janthinobacterium sp. (strain Marseille) (Minibacterium massiliensis) protein is Phosphoribosyl-ATP pyrophosphatase.